We begin with the raw amino-acid sequence, 353 residues long: E3 ubiquitin-protein ligase TRIM63 (353 aa).

The RING-type zinc-finger motif lies at C23–R79. Residues R74–A218 are interaction with TTN. The B box-type zinc-finger motif lies at G117–L159. Positions 122, 125, 145, and 151 each coordinate Zn(2+). Positions E207–E269 form a coiled coil. The region spanning L267 to G325 is the COS domain. Over residues T326–S344 the composition is skewed to acidic residues. The tract at residues T326–Q353 is disordered.

In terms of assembly, homodimer. Homooligomer and heterooligomer. Interacts with SUMO2, titin/TTN and GMEB1. Interacts with TRIM54 and probably with TRIM55 and TNNI3. Forms a ternary complex with RACK1 and PRKCE. Interacts with CKM. In terms of tissue distribution, muscle specific. Selectively expressed in heart and skeletal muscle. Also expressed in the iris.

It localises to the cytoplasm. Its subcellular location is the nucleus. It is found in the myofibril. The protein localises to the sarcomere. The protein resides in the m line. It localises to the z line. It catalyses the reaction S-ubiquitinyl-[E2 ubiquitin-conjugating enzyme]-L-cysteine + [acceptor protein]-L-lysine = [E2 ubiquitin-conjugating enzyme]-L-cysteine + N(6)-ubiquitinyl-[acceptor protein]-L-lysine.. The protein operates within protein modification; protein ubiquitination. E3 ubiquitin ligase. Mediates the ubiquitination and subsequent proteasomal degradation of CKM, GMEB1 and HIBADH. Regulates the proteasomal degradation of muscle proteins under amino acid starvation, where muscle protein is catabolized to provide other organs with amino acids. Inhibits de novo skeletal muscle protein synthesis under amino acid starvation. Regulates proteasomal degradation of cardiac troponin I/TNNI3 and probably of other sarcomeric-associated proteins. May play a role in striated muscle atrophy and hypertrophy by regulating an anti-hypertrophic PKC-mediated signaling pathway. May regulate the organization of myofibrils through TTN in muscle cells. The polypeptide is E3 ubiquitin-protein ligase TRIM63 (TRIM63) (Homo sapiens (Human)).